A 157-amino-acid polypeptide reads, in one-letter code: Transcription inhibitor protein Gfh1 (157 aa).

Residues 1 to 74 adopt a coiled-coil conformation; it reads MAREVKLTKA…LEDVLSRAVI (74 aa).

The protein belongs to the GreA/GreB family. As to quaternary structure, interacts with RNAP.

Functionally, inhibits all catalytic activities of RNA polymerase (RNAP) by partially occluding its substrate-binding site and preventing NTP binding. This chain is Transcription inhibitor protein Gfh1 (gfh1), found in Thermus aquaticus.